Consider the following 205-residue polypeptide: MSNILLITSSPRGDESVSNKFAGELAGKLKAKSASNTLVHRDLAADPIPHLDTVKTAAIRKPADQRTAEESVAADYSDKLVTELLAADTVVIGTGLINFNIYSGLKSWIDNVARAGQTFKYTETGPVGLATGKKVYIVLAAAGVYSEGPAVSMNHAVPYLKTVLGFMGMTDVEVIYVEGLAFGPEAVEKAVAAAEAKVEELAQAA.

FMN-binding positions include serine 10 and 16 to 18; that span reads SVS.

Belongs to the azoreductase type 1 family. Homodimer. FMN is required as a cofactor.

The catalysed reaction is 2 a quinone + NADH + H(+) = 2 a 1,4-benzosemiquinone + NAD(+). It catalyses the reaction N,N-dimethyl-1,4-phenylenediamine + anthranilate + 2 NAD(+) = 2-(4-dimethylaminophenyl)diazenylbenzoate + 2 NADH + 2 H(+). Functionally, quinone reductase that provides resistance to thiol-specific stress caused by electrophilic quinones. In terms of biological role, also exhibits azoreductase activity. Catalyzes the reductive cleavage of the azo bond in aromatic azo compounds to the corresponding amines. The protein is FMN-dependent NADH:quinone oxidoreductase of Agrobacterium fabrum (strain C58 / ATCC 33970) (Agrobacterium tumefaciens (strain C58)).